We begin with the raw amino-acid sequence, 633 residues long: tRNA uridine 5-carboxymethylaminomethyl modification enzyme MnmG (633 aa).

Residues 13 to 18 (GGGHAG), V125, and S180 each bind FAD. 273-287 (GPRYCPSIEDKITRF) serves as a coordination point for NAD(+). Q370 is a binding site for FAD.

Belongs to the MnmG family. Homodimer. Heterotetramer of two MnmE and two MnmG subunits. The cofactor is FAD.

The protein resides in the cytoplasm. NAD-binding protein involved in the addition of a carboxymethylaminomethyl (cmnm) group at the wobble position (U34) of certain tRNAs, forming tRNA-cmnm(5)s(2)U34. In Alteromonas mediterranea (strain DSM 17117 / CIP 110805 / LMG 28347 / Deep ecotype), this protein is tRNA uridine 5-carboxymethylaminomethyl modification enzyme MnmG.